The sequence spans 202 residues: Pyridoxal 5'-phosphate synthase subunit PdxT (202 aa).

Residue Gly52–Ser54 coordinates L-glutamine. The active-site Nucleophile is the Cys84. Residues Arg116 and Ile143–Arg144 contribute to the L-glutamine site. Residues His184 and Glu186 each act as charge relay system in the active site.

This sequence belongs to the glutaminase PdxT/SNO family. As to quaternary structure, in the presence of PdxS, forms a dodecamer of heterodimers. Only shows activity in the heterodimer.

It carries out the reaction aldehydo-D-ribose 5-phosphate + D-glyceraldehyde 3-phosphate + L-glutamine = pyridoxal 5'-phosphate + L-glutamate + phosphate + 3 H2O + H(+). It catalyses the reaction L-glutamine + H2O = L-glutamate + NH4(+). It participates in cofactor biosynthesis; pyridoxal 5'-phosphate biosynthesis. In terms of biological role, catalyzes the hydrolysis of glutamine to glutamate and ammonia as part of the biosynthesis of pyridoxal 5'-phosphate. The resulting ammonia molecule is channeled to the active site of PdxS. The protein is Pyridoxal 5'-phosphate synthase subunit PdxT of Pyrobaculum neutrophilum (strain DSM 2338 / JCM 9278 / NBRC 100436 / V24Sta) (Thermoproteus neutrophilus).